A 253-amino-acid chain; its full sequence is Tryptophan synthase alpha chain (253 aa).

Residues Glu45 and Asp56 each act as proton acceptor in the active site.

This sequence belongs to the TrpA family. As to quaternary structure, tetramer of two alpha and two beta chains.

The enzyme catalyses (1S,2R)-1-C-(indol-3-yl)glycerol 3-phosphate + L-serine = D-glyceraldehyde 3-phosphate + L-tryptophan + H2O. The protein operates within amino-acid biosynthesis; L-tryptophan biosynthesis; L-tryptophan from chorismate: step 5/5. Functionally, the alpha subunit is responsible for the aldol cleavage of indoleglycerol phosphate to indole and glyceraldehyde 3-phosphate. This chain is Tryptophan synthase alpha chain, found in Flavobacterium johnsoniae (strain ATCC 17061 / DSM 2064 / JCM 8514 / BCRC 14874 / CCUG 350202 / NBRC 14942 / NCIMB 11054 / UW101) (Cytophaga johnsonae).